Consider the following 271-residue polypeptide: MKLVFYGAGNMAQAIFKGIINSKKLKSHDIYLTNKSNEEALKNFAEELGVEYSYDDEKLLQDADYVFLGSKPYDFEKVAQRIQPYINENNRFISIMAGLPINYIQEQLQVENPIARIMPNTNAQVGHSVTGISFSGNFGPKSKEEVNDLVNAFGSVIEVDEDHLHQVTAITGSGPAFLYHVFEQYVKAGTDLGLEKDQVEESIKNLIIGTSKMIERSDLSMEQLRKNITSKGGTTQAGLNALAQHDIEAIFKDCLNAAVHRSVELSKNEDN.

It belongs to the pyrroline-5-carboxylate reductase family.

It localises to the cytoplasm. It carries out the reaction L-proline + NADP(+) = (S)-1-pyrroline-5-carboxylate + NADPH + 2 H(+). The catalysed reaction is L-proline + NAD(+) = (S)-1-pyrroline-5-carboxylate + NADH + 2 H(+). Its pathway is amino-acid biosynthesis; L-proline biosynthesis; L-proline from L-glutamate 5-semialdehyde: step 1/1. In terms of biological role, catalyzes the reduction of 1-pyrroline-5-carboxylate (PCA) to L-proline. In Staphylococcus haemolyticus (strain JCSC1435), this protein is Pyrroline-5-carboxylate reductase.